We begin with the raw amino-acid sequence, 226 residues long: MTIELKPGGLLIAIEGIDGAGKTTLARRLATTLDAAGARVVLSKEPTNGPWGTQLRQSAATGRLSAEEEAELLIRDRHEHVDTLIAPALARGDIVILDRYFPSMVAYQGAAGLPLDELLERNAFAPRPDVLLLLDLPPPTGLARIRARGDAPNHFETQDNLERCRTIFAALDLPGKHVVDASADADSVLRQAHAIIVAALADRLSGDAHTDTGKAALELLSGGRPA.

16–23 serves as a coordination point for ATP; that stretch reads GIDGAGKT.

Belongs to the thymidylate kinase family.

The catalysed reaction is dTMP + ATP = dTDP + ADP. In terms of biological role, phosphorylation of dTMP to form dTDP in both de novo and salvage pathways of dTTP synthesis. In Xanthomonas euvesicatoria pv. vesicatoria (strain 85-10) (Xanthomonas campestris pv. vesicatoria), this protein is Thymidylate kinase.